The following is a 769-amino-acid chain: Subtilisin-like protease 3 (769 aa).

N-linked (GlcNAc...) asparagine glycosylation is found at asparagine 68, asparagine 102, asparagine 108, asparagine 295, asparagine 316, and asparagine 356. Positions 293 to 302 are enriched in basic residues; it reads KINHSNKHKN. The tract at residues 293-329 is disordered; it reads KINHSNKHKNNNNNNNNNDYHNNNKSNYHSHSSAKCQ. Residues 303–325 show a composition bias toward low complexity; that stretch reads NNNNNNNNDYHNNNKSNYHSHSS. Residues 345–756 form the Peptidase S8 domain; it reads GYDIIQMEEG…GGFINVYDLV (412 aa). Aspartate 372 serves as the catalytic Charge relay system. The segment at 468 to 493 is disordered; it reads NIKSSDNIKSSDNINSSDNIKSSDNN. Residues asparagine 482 and asparagine 515 are each glycosylated (N-linked (GlcNAc...) asparagine). Histidine 523 (charge relay system) is an active-site residue. 2 N-linked (GlcNAc...) asparagine glycosylation sites follow: asparagine 584 and asparagine 616. Catalysis depends on serine 701, which acts as the Charge relay system. N-linked (GlcNAc...) asparagine glycosylation occurs at asparagine 720.

The protein belongs to the peptidase S8 family.

The protein resides in the secreted. The enzyme catalyses Hydrolysis of proteins with broad specificity for peptide bonds, and a preference for a large uncharged residue in P1. Hydrolyzes peptide amides.. Serine protease which may cleave PFN/profilin. This is Subtilisin-like protease 3 from Plasmodium falciparum (isolate 3D7).